The primary structure comprises 491 residues: Ketol-acid reductoisomerase (NADP(+)) (491 aa).

Positions 15 to 208 constitute a KARI N-terminal Rossmann domain; the sequence is AQLGKCRFMG…GGHRAGVLES (194 aa). Residues 45–48, Arg-68, Arg-76, Ser-78, and 108–110 each bind NADP(+); these read CGAQ and DKQ. His-132 is a catalytic residue. Gly-158 contributes to the NADP(+) binding site. KARI C-terminal knotted domains follow at residues 209 to 344 and 345 to 484; these read SFVA…TAPQ and YEGK…MTDM. Asp-217, Glu-221, Glu-389, and Glu-393 together coordinate Mg(2+). Ser-414 is a substrate binding site.

This sequence belongs to the ketol-acid reductoisomerase family. The cofactor is Mg(2+).

It catalyses the reaction (2R)-2,3-dihydroxy-3-methylbutanoate + NADP(+) = (2S)-2-acetolactate + NADPH + H(+). It carries out the reaction (2R,3R)-2,3-dihydroxy-3-methylpentanoate + NADP(+) = (S)-2-ethyl-2-hydroxy-3-oxobutanoate + NADPH + H(+). The protein operates within amino-acid biosynthesis; L-isoleucine biosynthesis; L-isoleucine from 2-oxobutanoate: step 2/4. It functions in the pathway amino-acid biosynthesis; L-valine biosynthesis; L-valine from pyruvate: step 2/4. In terms of biological role, involved in the biosynthesis of branched-chain amino acids (BCAA). Catalyzes an alkyl-migration followed by a ketol-acid reduction of (S)-2-acetolactate (S2AL) to yield (R)-2,3-dihydroxy-isovalerate. In the isomerase reaction, S2AL is rearranged via a Mg-dependent methyl migration to produce 3-hydroxy-3-methyl-2-ketobutyrate (HMKB). In the reductase reaction, this 2-ketoacid undergoes a metal-dependent reduction by NADPH to yield (R)-2,3-dihydroxy-isovalerate. This chain is Ketol-acid reductoisomerase (NADP(+)), found in Escherichia coli (strain UTI89 / UPEC).